The following is a 455-amino-acid chain: Phosphoglucosamine mutase (455 aa).

S108 (phosphoserine intermediate) is an active-site residue. Positions 108, 246, 248, and 250 each coordinate Mg(2+). Position 108 is a phosphoserine (S108).

It belongs to the phosphohexose mutase family. Requires Mg(2+) as cofactor. Activated by phosphorylation.

The catalysed reaction is alpha-D-glucosamine 1-phosphate = D-glucosamine 6-phosphate. Catalyzes the conversion of glucosamine-6-phosphate to glucosamine-1-phosphate. The chain is Phosphoglucosamine mutase from Frankia casuarinae (strain DSM 45818 / CECT 9043 / HFP020203 / CcI3).